We begin with the raw amino-acid sequence, 1007 residues long: Probable beta-galactosidase A (1007 aa).

The signal sequence occupies residues 1 to 18 (MKLSSACAIALLAAQAAG). 4 residues coordinate substrate: tyrosine 96, asparagine 140, alanine 141, and glutamate 142. Asparagine 156 is a glycosylation site (N-linked (GlcNAc...) asparagine). Substrate is bound at residue asparagine 199. Catalysis depends on glutamate 200, which acts as the Proton donor. Cysteine 205 and cysteine 206 are oxidised to a cystine. Tyrosine 260 contributes to the substrate binding site. A disulfide bridge connects residues cysteine 266 and cysteine 315. Glutamate 298 (nucleophile) is an active-site residue. A substrate-binding site is contributed by tyrosine 364. Asparagine 373, asparagine 402, asparagine 422, asparagine 478, asparagine 522, asparagine 622, asparagine 739, asparagine 760, asparagine 777, and asparagine 805 each carry an N-linked (GlcNAc...) asparagine glycan. Residues 862-881 (RQGFHQPEPPSQDWKSSSPL) form a disordered region. N-linked (GlcNAc...) asparagine glycosylation occurs at asparagine 914.

Belongs to the glycosyl hydrolase 35 family.

The protein localises to the secreted. It carries out the reaction Hydrolysis of terminal non-reducing beta-D-galactose residues in beta-D-galactosides.. Its function is as follows. Cleaves beta-linked terminal galactosyl residues from gangliosides, glycoproteins, and glycosaminoglycans. The polypeptide is Probable beta-galactosidase A (lacA) (Aspergillus phoenicis (Aspergillus saitoi)).